Reading from the N-terminus, the 262-residue chain is Small ribosomal subunit protein eS4 (262 aa).

The S4 RNA-binding domain occupies 42–104; that stretch reads LPLLIFLRNR…TGEFFRLIYD (63 aa).

This sequence belongs to the eukaryotic ribosomal protein eS4 family.

In Lysiphlebus testaceipes (Greenbugs aphid parastoid), this protein is Small ribosomal subunit protein eS4 (RpS4).